We begin with the raw amino-acid sequence, 173 residues long: Bacterial deubiquitinase-like protein BilC (173 aa).

Residues H103, H105, and D115 each coordinate Zn(2+).

The protein belongs to the M67B family. Zn(2+) serves as cofactor.

Its function is as follows. Component of the Bil (bacterial ISG15-like) antiviral defense system, composed of BilA, BilB, BilC and BilD. The Bil system specifically conjugates a ubiquitin-like moiety (bilA) to the bacteriophage central tail fiber (CTF, or tip attachment protein J) via reactions involving E1 (bilD) and E2 (bilB). Modifies CTF of phage SECphi27 and SECphi4, which probably interferes with assembly of the phage tail. Also modifies T5 baseplate hub protein pb3 (gene D16), but not gp27 of phage T6 (Bil defends against T6). BilC is a probable metalloprotease that may cleave non-specifically conjugated targets. Bil-encoding bacteria produce mostly defective phage SECphi27, many of which have phage assembly defects, including no tails. SECphi27 phage progeny produced in E.coli with the Bil system inject less DNA into naive host cells, maybe because the phage are less able to adsorb and inject their DNA into host cells. Functionally, expression of the Bil system in E.coli (strain MG1655) confers about 100-fold resistance to phage SECphi27, SECphi18, SECphi6, SECphi4 and T5, but not to SECphi17. When cells expressing the Bil system are infected by phage SECphi27 at low multiplicity of infection (0.03 MOI) the culture survives, at 3.0 MOI the culture collapses at the same time as cells without the Bil system. In terms of biological role, cleaves a ubiquitin-GFP (Ubl-GFP) fusion protein in vivo. In Collimonas sp. (strain OK412), this protein is Bacterial deubiquitinase-like protein BilC.